Reading from the N-terminus, the 215-residue chain is Pyridoxine/pyridoxamine 5'-phosphate oxidase (215 aa).

Substrate-binding positions include 9 to 12 and lysine 69; that span reads RRDY. Residues 64–69, 79–80, lysine 86, and glutamine 108 contribute to the FMN site; these read RVLLLK and FT. Substrate-binding residues include tyrosine 126, arginine 130, and serine 134. FMN is bound by residues 143 to 144 and tryptophan 188; that span reads QS. 194–196 is a substrate binding site; sequence RLH. Residue arginine 198 coordinates FMN.

This sequence belongs to the pyridoxamine 5'-phosphate oxidase family. Homodimer. The cofactor is FMN.

The catalysed reaction is pyridoxamine 5'-phosphate + O2 + H2O = pyridoxal 5'-phosphate + H2O2 + NH4(+). It carries out the reaction pyridoxine 5'-phosphate + O2 = pyridoxal 5'-phosphate + H2O2. It participates in cofactor metabolism; pyridoxal 5'-phosphate salvage; pyridoxal 5'-phosphate from pyridoxamine 5'-phosphate: step 1/1. Its pathway is cofactor metabolism; pyridoxal 5'-phosphate salvage; pyridoxal 5'-phosphate from pyridoxine 5'-phosphate: step 1/1. Catalyzes the oxidation of either pyridoxine 5'-phosphate (PNP) or pyridoxamine 5'-phosphate (PMP) into pyridoxal 5'-phosphate (PLP). The protein is Pyridoxine/pyridoxamine 5'-phosphate oxidase of Pseudomonas syringae pv. tomato (strain ATCC BAA-871 / DC3000).